A 397-amino-acid polypeptide reads, in one-letter code: Elongation factor Tu (397 aa).

Positions 10 to 206 (KPHVNIGTIG…AVDENIPQPE (197 aa)) constitute a tr-type G domain. Positions 19–26 (GHVDHGKT) are G1. 19-26 (GHVDHGKT) is a GTP binding site. Threonine 26 is a binding site for Mg(2+). The segment at 62–66 (GITIS) is G2. The interval 83–86 (DCPG) is G3. Residues 83 to 87 (DCPGH) and 138 to 141 (NKAD) contribute to the GTP site. Residues 138-141 (NKAD) form a G4 region. A G5 region spans residues 176–178 (SAL).

This sequence belongs to the TRAFAC class translation factor GTPase superfamily. Classic translation factor GTPase family. EF-Tu/EF-1A subfamily. In terms of assembly, monomer.

It is found in the cytoplasm. The enzyme catalyses GTP + H2O = GDP + phosphate + H(+). Functionally, GTP hydrolase that promotes the GTP-dependent binding of aminoacyl-tRNA to the A-site of ribosomes during protein biosynthesis. The polypeptide is Elongation factor Tu (Streptomyces cinnamoneus (Streptoverticillium cinnamoneum)).